We begin with the raw amino-acid sequence, 407 residues long: MSIENKNTGVKKVVLAYSGGLDTSAIIPWLKENYDNCEIIAFCADVGQGEEELVGLTEKALASGASECHIVDLKEEFVKDYIYPTMATGAIYEGTYLLGTSMARPIIAKAQVEVARKVGADALCHGCTGKGNDQVRFEGCFAALAPDLKVIAPWREWTMQSREDLLDYLAERNIKTSASATKIYSRDANAFHISHEGGELEDPWNEPSKGVWTLTADPEDAPNQPEYVSLEVENGRVTKVNGEALTPYAALMKLNAIAAPHGVGRIDITENRLVGMKSRGCYETPGGTVMFAALRAIEELVLDKTSRTWREQVGAQMAHLVYDGRWFTPLCKSLLAASESLAESVNGGVVVKLYKGHAIAVKKRSPNSLYSEAFATFGEDQVYDQKHAEGFIRLYSLASRIRALNAK.

ATP is bound by residues 16 to 24 (AYSGGLDTS) and alanine 44. The L-citrulline site is built by tyrosine 96 and serine 101. Position 126 (glycine 126) interacts with ATP. L-aspartate is bound by residues threonine 128, asparagine 132, and aspartate 133. Asparagine 132 is an L-citrulline binding site. Residues arginine 136, serine 185, serine 194, glutamate 270, and tyrosine 282 each contribute to the L-citrulline site.

This sequence belongs to the argininosuccinate synthase family. Type 1 subfamily. Homotetramer.

It is found in the cytoplasm. The catalysed reaction is L-citrulline + L-aspartate + ATP = 2-(N(omega)-L-arginino)succinate + AMP + diphosphate + H(+). It participates in amino-acid biosynthesis; L-arginine biosynthesis; L-arginine from L-ornithine and carbamoyl phosphate: step 2/3. This chain is Argininosuccinate synthase, found in Shewanella sp. (strain W3-18-1).